Here is a 161-residue protein sequence, read N- to C-terminus: Protein-export protein SecB (161 aa).

The protein belongs to the SecB family. Homotetramer, a dimer of dimers. One homotetramer interacts with 1 SecA dimer.

The protein localises to the cytoplasm. Functionally, one of the proteins required for the normal export of preproteins out of the cell cytoplasm. It is a molecular chaperone that binds to a subset of precursor proteins, maintaining them in a translocation-competent state. It also specifically binds to its receptor SecA. This Shewanella baltica (strain OS223) protein is Protein-export protein SecB.